The chain runs to 95 residues: uncharacterized protein (95 aa).

Residues 12-32 form a helical membrane-spanning segment; that stretch reads LASLIVSMVVLVVGLALWFFV. The disordered stretch occupies residues 66–87; the sequence is ANEPEKEAEPATAASEPKEDED.

The protein resides in the cell membrane. This is an uncharacterized protein from Salmonella typhi.